A 122-amino-acid chain; its full sequence is Small ribosomal subunit protein uS13 (122 aa).

A disordered region spans residues 99–122; the sequence is RGQRTHTNARTRKGPAKAIAGKKK.

Belongs to the universal ribosomal protein uS13 family. Part of the 30S ribosomal subunit. Forms a loose heterodimer with protein S19. Forms two bridges to the 50S subunit in the 70S ribosome.

Its function is as follows. Located at the top of the head of the 30S subunit, it contacts several helices of the 16S rRNA. In the 70S ribosome it contacts the 23S rRNA (bridge B1a) and protein L5 of the 50S subunit (bridge B1b), connecting the 2 subunits; these bridges are implicated in subunit movement. Contacts the tRNAs in the A and P-sites. The chain is Small ribosomal subunit protein uS13 from Rhodopseudomonas palustris (strain BisB5).